We begin with the raw amino-acid sequence, 267 residues long: Low affinity immunoglobulin gamma Fc region receptor III (267 aa).

Residues 1–36 (MTLETQMFQNAHSGSQWLLPPLTMLLLFAFADRQTA) form the signal peptide. The Extracellular segment spans residues 37-221 (NLPKAVVKRD…STSSLVWFHA (185 aa)). Ig-like C2-type domains follow at residues 39–121 (PKAV…EVIS) and 122–204 (DWLL…VTIT). Disulfide bonds link Cys-62–Cys-104 and Cys-143–Cys-187. Residues Asn-70, Asn-78, Asn-97, Asn-171, and Asn-178 are each glycosylated (N-linked (GlcNAc...) asparagine). A helical membrane pass occupies residues 222–241 (AFCLVMCLLFAVDTGLYFCV). The Cytoplasmic portion of the chain corresponds to 242–267 (RRNLQTSGEDWRKSLSVGKYKAPQDK).

May form multisubunit complex with other heteroproteins. This association is required for efficient cell-surface expression. Does not associate with CD3 zeta. In terms of tissue distribution, expressed on natural killer cells and macrophages.

It localises to the cell membrane. Receptor for the Fc region of complexed immunoglobulins gamma. Low affinity receptor which binds to IgG1, IgG2a and IgG2b. Mediates neutrophil activation by IgG complexes redundantly with Fcgr4. The polypeptide is Low affinity immunoglobulin gamma Fc region receptor III (Fcgr3) (Rattus norvegicus (Rat)).